The sequence spans 198 residues: NAD(P)H dehydrogenase (quinone) (198 aa).

Positions 6-190 (ILVLYYSRHG…LCRALGKRLA (185 aa)) constitute a Flavodoxin-like domain. Residues 12 to 17 (SRHGAT), 79 to 81 (TRF), 114 to 120 (STASLHG), and histidine 135 each bind FMN.

Belongs to the WrbA family. As to quaternary structure, homodimer. FMN is required as a cofactor.

The catalysed reaction is a quinone + NADH + H(+) = a quinol + NAD(+). It carries out the reaction a quinone + NADPH + H(+) = a quinol + NADP(+). The polypeptide is NAD(P)H dehydrogenase (quinone) (Pseudomonas aeruginosa (strain ATCC 15692 / DSM 22644 / CIP 104116 / JCM 14847 / LMG 12228 / 1C / PRS 101 / PAO1)).